The sequence spans 328 residues: Protein MGF 300-4L (328 aa).

Belongs to the asfivirus MGF 300 family.

The chain is Protein MGF 300-4L from Ornithodoros (relapsing fever ticks).